Here is a 995-residue protein sequence, read N- to C-terminus: Beta-agarase A (995 aa).

Residues 1–20 (MKIKFLSAAIAASLALPLSA) form the signal peptide. The segment at 936-972 (GTNIGVSHSGPEAPDPGEPVDPPIDPPTPPTGGVTGG) is disordered. The segment covering 948-965 (APDPGEPVDPPIDPPTPP) has biased composition (pro residues).

Belongs to the glycosyl hydrolase 50 family.

The catalysed reaction is Hydrolysis of (1-&gt;4)-beta-D-galactosidic linkages in agarose, giving the tetramer as the predominant product.. Functionally, hydrolyzes agarose and also neoagarotetraose to yield neoagarobiose. This chain is Beta-agarase A (agaA), found in Vibrio sp. (strain JT0107).